A 105-amino-acid chain; its full sequence is Insulin (105 aa).

The signal sequence occupies residues 1 to 24 (MALWTRLVPLLALLALWAPAPAHA). 3 disulfide bridges follow: C31-C91, C43-C104, and C90-C95. A propeptide spans 57–82 (EVEGPQVGALELAGGPGAGGLEGPPQ) (c peptide).

This sequence belongs to the insulin family. As to quaternary structure, heterodimer of a B chain and an A chain linked by two disulfide bonds.

The protein resides in the secreted. Insulin decreases blood glucose concentration. It increases cell permeability to monosaccharides, amino acids and fatty acids. It accelerates glycolysis, the pentose phosphate cycle, and glycogen synthesis in liver. This chain is Insulin (INS), found in Ovis aries (Sheep).